The following is a 253-amino-acid chain: Phycocyanobilin:ferredoxin oxidoreductase (253 aa).

Belongs to the HY2 family.

The catalysed reaction is (2R,3Z)-phycocyanobilin + 4 oxidized [2Fe-2S]-[ferredoxin] = biliverdin IXalpha + 4 reduced [2Fe-2S]-[ferredoxin] + 4 H(+). Functionally, catalyzes the four-electron reduction of biliverdin IX-alpha (2-electron reduction at both the A and D rings); the reaction proceeds via an isolatable 2-electron intermediate, 181,182-dihydrobiliverdin. The polypeptide is Phycocyanobilin:ferredoxin oxidoreductase (pcyA) (Gloeobacter violaceus (strain ATCC 29082 / PCC 7421)).